The chain runs to 356 residues: Thrombomodulin (356 aa).

Residues 1-296 (RGARGETEGR…SPAPAGPLHS (296 aa)) lie on the Extracellular side of the membrane. 2 consecutive EGF-like domains span residues 17–57 (GAWA…RSCG) and 60–98 (AEHP…HRCE). 18 cysteine pairs are disulfide-bonded: Cys-21/Cys-32, Cys-28/Cys-41, Cys-43/Cys-56, Cys-64/Cys-72, Cys-68/Cys-82, Cys-84/Cys-97, Cys-103/Cys-114, Cys-110/Cys-123, Cys-125/Cys-136, Cys-143/Cys-152, Cys-148/Cys-162, Cys-164/Cys-178, Cys-182/Cys-191, Cys-187/Cys-199, Cys-201/Cys-213, Cys-219/Cys-228, Cys-224/Cys-237, and Cys-239/Cys-253. Residues 99-137 (DVDDCAQLPSPCPQRCVNTEGGFQCHCDTGYELVDGECV) form the EGF-like 3; calcium-binding domain. 2 EGF-like domains span residues 139–179 (PVDP…HKCQ) and 178–214 (CQMF…STCT). The region spanning 215-254 (DINECDTNICPGQCHNLPGTYECICGPDSALSGQIGIDCD) is the EGF-like 6; calcium-binding domain. Residues 255–290 (PTQVNEERGTPEDYGGSGEPPVSPTPGATARPSPAP) are disordered. An O-linked (Xyl...) (chondroitin sulfate) serine glycan is attached at Ser-271. Residues 297–320 (GVLVGISIASLSLVVALLALLCHL) traverse the membrane as a helical segment. The Cytoplasmic portion of the chain corresponds to 321–356 (RKKQGASRGELEYKCGVPAKELMLQQVKTERTPQKL).

Interacts with ITGAL, ITGAM and ITGB2. Interacts with thrombin/F2; this interaction switches the specificity of thrombin from a procoagulant to an anticoagulant and antifibrinolytic protease. Interacts with ANGP1 and ANGP2; these interactions significantly inhibit the generation of activated PC and TAFIa/CPB2 by the thrombin/thrombomodulin complex. Interacts with PF4; this interaction enhances generation of activated protein C. Interacts with HMGB1; this interaction inhibits HMGB1 inflammatory activity. As to expression, endothelial cells are unique in synthesizing thrombomodulin.

It is found in the membrane. Endothelial cell receptor that plays a critical role in regulating several physiological processes including hemostasis, coagulation, fibrinolysis, inflammation, and angiogenesis. Acts as a cofactor for thrombin activation of protein C/PROC on the surface of vascular endothelial cells leading to initiation of the activated protein C anticoagulant pathway. Also accelerates the activation of the plasma carboxypeptidase B2/CPB2, which catalyzes removal of C-terminal basic amino acids from its substrates including kinins or anaphylatoxins leading to fibrinolysis inhibition. Plays critical protective roles in changing the cleavage specificity of protease-activated receptor 1/PAR1, inhibiting endothelial cell permeability and inflammation. Suppresses inflammation distinctly from its anticoagulant cofactor activity by sequestering HMGB1 thereby preventing it from engaging cellular receptors such as RAGE and contributing to the inflammatory response. In Bos taurus (Bovine), this protein is Thrombomodulin (THBD).